Here is a 395-residue protein sequence, read N- to C-terminus: Probable L-tyrosine/L-aspartate decarboxylase (395 aa).

Lys242 bears the N6-(pyridoxal phosphate)lysine mark.

The protein belongs to the group II decarboxylase family. MfnA subfamily. The cofactor is pyridoxal 5'-phosphate.

The enzyme catalyses L-tyrosine + H(+) = tyramine + CO2. It carries out the reaction L-aspartate + H(+) = beta-alanine + CO2. Its pathway is cofactor biosynthesis; methanofuran biosynthesis. It participates in cofactor biosynthesis; coenzyme A biosynthesis. Its function is as follows. Catalyzes the decarboxylation of L-tyrosine to produce tyramine for methanofuran biosynthesis. Can also catalyze the decarboxylation of L-aspartate to produce beta-alanine for coenzyme A (CoA) biosynthesis. The chain is Probable L-tyrosine/L-aspartate decarboxylase from Methanosarcina barkeri (strain Fusaro / DSM 804).